A 354-amino-acid polypeptide reads, in one-letter code: Serum paraoxonase/arylesterase 2 (354 aa).

An intrachain disulfide couples Cys42 to Cys352. Residues Glu53 and Asp54 each contribute to the Ca(2+) site. His114 serves as the catalytic Proton acceptor. Ca(2+)-binding residues include Ile116, Asn167, Asp168, and Asn223. Asn254 carries N-linked (GlcNAc...) asparagine glycosylation. Positions 268 and 269 each coordinate Ca(2+). N-linked (GlcNAc...) asparagine glycosylation is found at Asn269 and Asn323.

It belongs to the paraoxonase family. Homotrimer. Requires Ca(2+) as cofactor. The signal sequence is not cleaved. In terms of tissue distribution, widely expressed with highest expression in liver, lung, placenta, testis and heart.

The protein localises to the membrane. It catalyses the reaction a phenyl acetate + H2O = a phenol + acetate + H(+). The enzyme catalyses an N-acyl-L-homoserine lactone + H2O = an N-acyl-L-homoserine + H(+). Capable of hydrolyzing lactones and a number of aromatic carboxylic acid esters. Has antioxidant activity. Is not associated with high density lipoprotein. Prevents LDL lipid peroxidation, reverses the oxidation of mildly oxidized LDL, and inhibits the ability of MM-LDL to induce monocyte chemotaxis. The sequence is that of Serum paraoxonase/arylesterase 2 (PON2) from Homo sapiens (Human).